Here is a 488-residue protein sequence, read N- to C-terminus: MAQSVQERTRLKNKRYESGVIPYAKMGYWDPNYVVKDTDILALFRVTPQPGVDPIEASAAVAGESSTATWTVIWCDLLTACDVYRAKAYRVDQVPNSPDQYFAYIAYDLDLFEEGSIANLTASIIGNVFGFKALAALRLEDMRIPIGYLKTFQGPATGVVVERERLNMFGKPFLGATVKPKLGLSSKNYGRVVYEGLKGGLNFLKDDENINSQPFMRWRERFLYVMEGVNRASAATGEIKGSYLNVTAATMEEMYNRAACAKEVGSIIIMIDLVIGYTAIQSMAIWARENNMILHLHRAGNSTYARQKNHGINFRVICKWMRMAGVDHIHAGTVVGKLEGDPIIVKGFYNTLLLPKLDVNLPQGLFFEMDWASLRKTVPVASGGIHAGQMHLLLKYLGDDVVLQFGGGTLGHPDGIQAGATANRVALEAIVLARNEGRDYVNEGPQILKEAARTCGPLQTSLDLWKDISFNFTSTDTADFVETPTANV.

Substrate contacts are provided by asparagine 127 and threonine 177. Lysine 179 serves as the catalytic Proton acceptor. Residue lysine 181 coordinates substrate. Mg(2+) is bound by residues lysine 205, aspartate 207, and glutamate 208. Lysine 205 carries the post-translational modification N6-carboxylysine. Residue histidine 297 is the Proton acceptor of the active site. Positions 298, 330, and 382 each coordinate substrate.

Belongs to the RuBisCO large chain family. Type I subfamily. As to quaternary structure, heterohexadecamer of 8 large chains and 8 small chains. It depends on Mg(2+) as a cofactor.

It is found in the plastid. The protein resides in the chloroplast. The enzyme catalyses 2 (2R)-3-phosphoglycerate + 2 H(+) = D-ribulose 1,5-bisphosphate + CO2 + H2O. It carries out the reaction D-ribulose 1,5-bisphosphate + O2 = 2-phosphoglycolate + (2R)-3-phosphoglycerate + 2 H(+). In terms of biological role, ruBisCO catalyzes two reactions: the carboxylation of D-ribulose 1,5-bisphosphate, the primary event in carbon dioxide fixation, as well as the oxidative fragmentation of the pentose substrate in the photorespiration process. Both reactions occur simultaneously and in competition at the same active site. This chain is Ribulose bisphosphate carboxylase large chain, found in Cyanidium caldarium (Red alga).